Reading from the N-terminus, the 347-residue chain is Syntaxin-32 (347 aa).

The Cytoplasmic segment spans residues 1–325; the sequence is MSARHGQSSY…RYLNSISSNR (325 aa). Disordered regions lie at residues 172 to 191 and 208 to 251; these read HESR…TNPF and PLPW…QQMV. 2 stretches are compositionally biased toward polar residues: residues 177-191 and 213-222; these read QLFS…TNPF and NGSSSSSSQL. Positions 237 to 249 are enriched in low complexity; the sequence is QQSQQQQQQQQQQ. Residues 255–317 enclose the t-SNARE coiled-coil homology domain; sequence DTYMQGRAEA…EGAQSQLARY (63 aa). A helical; Anchor for type IV membrane protein transmembrane segment spans residues 326 to 346; sequence WLMMKIFFVLIAFLMIFLFFV. Position 347 (Ala-347) is a topological domain, vesicular.

It belongs to the syntaxin family. In terms of assembly, part of the t-SNARE complex.

It is found in the golgi apparatus. The protein resides in the cis-Golgi network membrane. Vesicle trafficking protein that functions in the secretory pathway. This chain is Syntaxin-32 (SYP32), found in Arabidopsis thaliana (Mouse-ear cress).